Here is a 92-residue protein sequence, read N- to C-terminus: Acylphosphatase (92 aa).

The 87-residue stretch at 6-92 folds into the Acylphosphatase-like domain; it reads RMYVIVYGIV…TGEFASFDTY (87 aa). Catalysis depends on residues arginine 21 and asparagine 39.

This sequence belongs to the acylphosphatase family.

It carries out the reaction an acyl phosphate + H2O = a carboxylate + phosphate + H(+). This Sulfolobus acidocaldarius (strain ATCC 33909 / DSM 639 / JCM 8929 / NBRC 15157 / NCIMB 11770) protein is Acylphosphatase (acyP).